Reading from the N-terminus, the 358-residue chain is MSKLNIKGIVKRCDDYGKLVNRYCGPVFVGFATSLITLIAITYFTIIFPATSDFSNLFFIFNFFCDLSISLFLTYGIYFNYIKAIITKPGYPNLNSTLINNINSNINNSNNNKDKDKILIIDNVKWSYCKKCSKAKPPRCHHCSVCDKCVLKMDHHCPWIGGCVGFYNYRYFFLFLSYLWVSVCYVLAHSLPLLFGGYLYSKKYTEIDRLLVIISSIGSFITFVAVGSFGGFHAYLIGSGQTSIENLYPPKKRPNYSLTSIKDNFQIVLGKGDYWFSGLLPINYTPIGNGCDFKLNISNEDNNKNNENNENNENNEIDNHNNNNNNNNNNNNNEKEDNINENDNLISYDTDEYNRHKK.

Transmembrane regions (helical) follow at residues 28–48, 57–77, 171–191, and 210–230; these read FVGF…TIIF, LFFI…TYGI, YFFL…AHSL, and LLVI…GSFG. The region spanning 127–177 is the DHHC domain; that stretch reads SYCKKCSKAKPPRCHHCSVCDKCVLKMDHHCPWIGGCVGFYNYRYFFLFLS. 2 N-linked (GlcNAc...) asparagine glycosylation sites follow: N255 and N296. Residues 302–358 are disordered; sequence NNKNNENNENNENNEIDNHNNNNNNNNNNNNNEKEDNINENDNLISYDTDEYNRHKK. The span at 305-332 shows a compositional bias: low complexity; it reads NNENNENNENNEIDNHNNNNNNNNNNNN.

It belongs to the DHHC palmitoyltransferase family.

Its subcellular location is the membrane. It carries out the reaction L-cysteinyl-[protein] + hexadecanoyl-CoA = S-hexadecanoyl-L-cysteinyl-[protein] + CoA. This is Putative ZDHHC-type palmitoyltransferase 4 from Dictyostelium discoideum (Social amoeba).